Here is a 251-residue protein sequence, read N- to C-terminus: Probable transcriptional regulatory protein DET0444 (251 aa).

This sequence belongs to the TACO1 family.

Its subcellular location is the cytoplasm. The polypeptide is Probable transcriptional regulatory protein DET0444 (Dehalococcoides mccartyi (strain ATCC BAA-2266 / KCTC 15142 / 195) (Dehalococcoides ethenogenes (strain 195))).